We begin with the raw amino-acid sequence, 194 residues long: tRNA (guanosine(18)-2'-O)-methyltransferase (194 aa).

S-adenosyl-L-methionine is bound by residues threonine 99, 122-126, isoleucine 142, and leucine 151; that span reads GAEKW.

The protein belongs to the class IV-like SAM-binding methyltransferase superfamily. RNA methyltransferase TrmH family. As to quaternary structure, monomer.

The catalysed reaction is guanosine(18) in tRNA + S-adenosyl-L-methionine = 2'-O-methylguanosine(18) in tRNA + S-adenosyl-L-homocysteine + H(+). Its activity is regulated as follows. Stimulated by magnesium ions and spermine. Inhibited by S-adenosyl-homocysteine. Catalyzes the 2'-O methylation of guanosine at position 18 in tRNA. The protein is tRNA (guanosine(18)-2'-O)-methyltransferase of Thermus thermophilus (strain ATCC BAA-163 / DSM 7039 / HB27).